A 570-amino-acid polypeptide reads, in one-letter code: 4-coumarate--CoA ligase 4 (570 aa).

Residues S218, S219, G220, T221, T222, and K226 each coordinate ATP. A (E)-4-coumaroyl-AMP-binding site is contributed by Y268. CoA is bound at residue R289. Residues 291–360 (ELNLVMELIQ…LKFPNAIFGQ (70 aa)) form an SBD1 region. Residues A338, Q360, G361, and T365 each contribute to the (E)-4-coumaroyl-AMP site. Q360, G361, T365, D448, and R463 together coordinate ATP. Residues 361-427 (GYGMTESGTV…VRGHQLMKGY (67 aa)) are SBD2. (E)-4-coumaroyl-AMP-binding residues include K465 and K469. CoA is bound by residues K471 and G472. K554 contributes to the ATP binding site.

It belongs to the ATP-dependent AMP-binding enzyme family. Mg(2+) serves as cofactor.

It catalyses the reaction (E)-sinapate + ATP + CoA = (E)-sinapoyl-CoA + AMP + diphosphate. It carries out the reaction (E)-4-coumarate + ATP + CoA = (E)-4-coumaroyl-CoA + AMP + diphosphate. The enzyme catalyses (E)-caffeate + ATP + CoA = (E)-caffeoyl-CoA + AMP + diphosphate. The catalysed reaction is (E)-ferulate + ATP + CoA = (E)-feruloyl-CoA + AMP + diphosphate. It catalyses the reaction (E)-sinapate + ATP + H(+) = (E)-sinapoyl-AMP + diphosphate. It carries out the reaction (E)-sinapoyl-AMP + CoA = (E)-sinapoyl-CoA + AMP + H(+). The enzyme catalyses (E)-4-coumarate + ATP + H(+) = (E)-4-coumaroyl-AMP + diphosphate. The catalysed reaction is (E)-4-coumaroyl-AMP + CoA = (E)-4-coumaroyl-CoA + AMP + H(+). It catalyses the reaction (E)-caffeate + ATP + H(+) = (E)-caffeoyl-AMP + diphosphate. It carries out the reaction (E)-caffeoyl-AMP + CoA = (E)-caffeoyl-CoA + AMP + H(+). The enzyme catalyses (E)-ferulate + ATP + H(+) = (E)-feruloyl-AMP + diphosphate. The catalysed reaction is (E)-feruloyl-AMP + CoA = (E)-feruloyl-CoA + AMP + H(+). It functions in the pathway phytoalexin biosynthesis; 3,4',5-trihydroxystilbene biosynthesis; 3,4',5-trihydroxystilbene from trans-4-coumarate: step 1/2. In terms of biological role, produces CoA thioesters of a variety of hydroxy- and methoxy-substituted cinnamic acids, which are used to synthesize several phenylpropanoid-derived compounds, including anthocyanins, flavonoids, isoflavonoids, coumarins, lignin, suberin and wall-bound phenolics. Follows a two-step reaction mechanism, wherein the carboxylate substrate first undergoes adenylation by ATP, followed by a thioesterification in the presence of CoA to yield the final CoA thioesters. The polypeptide is 4-coumarate--CoA ligase 4 (Arabidopsis thaliana (Mouse-ear cress)).